We begin with the raw amino-acid sequence, 236 residues long: Ribonuclease PH (236 aa).

Phosphate-binding positions include arginine 86 and 124-126; that span reads GTR.

The protein belongs to the RNase PH family. Homohexameric ring arranged as a trimer of dimers.

The catalysed reaction is tRNA(n+1) + phosphate = tRNA(n) + a ribonucleoside 5'-diphosphate. Phosphorolytic 3'-5' exoribonuclease that plays an important role in tRNA 3'-end maturation. Removes nucleotide residues following the 3'-CCA terminus of tRNAs; can also add nucleotides to the ends of RNA molecules by using nucleoside diphosphates as substrates, but this may not be physiologically important. Probably plays a role in initiation of 16S rRNA degradation (leading to ribosome degradation) during starvation. This chain is Ribonuclease PH, found in Thermodesulfovibrio yellowstonii (strain ATCC 51303 / DSM 11347 / YP87).